Reading from the N-terminus, the 187-residue chain is Signal peptidase I U (187 aa).

The Cytoplasmic portion of the chain corresponds to 1–16; sequence MNAKTITLKKKRKIKT. The chain crosses the membrane as a helical span at residues 17–37; the sequence is IVVLSIIMIAALIFTIRLVFY. Over 38-187 the chain is Extracellular; sequence KPFLIEGSSM…YPFGEMRQAK (150 aa). Residues S46 and K88 contribute to the active site.

It belongs to the peptidase S26 family.

It is found in the cell membrane. It catalyses the reaction Cleavage of hydrophobic, N-terminal signal or leader sequences from secreted and periplasmic proteins.. This chain is Signal peptidase I U (sipU), found in Bacillus subtilis (strain 168).